The following is a 450-amino-acid chain: UDP-N-acetylmuramoylalanine--D-glutamate ligase (450 aa).

115–121 is a binding site for ATP; the sequence is GTNGKTT.

Belongs to the MurCDEF family.

The protein localises to the cytoplasm. The enzyme catalyses UDP-N-acetyl-alpha-D-muramoyl-L-alanine + D-glutamate + ATP = UDP-N-acetyl-alpha-D-muramoyl-L-alanyl-D-glutamate + ADP + phosphate + H(+). Its pathway is cell wall biogenesis; peptidoglycan biosynthesis. Its function is as follows. Cell wall formation. Catalyzes the addition of glutamate to the nucleotide precursor UDP-N-acetylmuramoyl-L-alanine (UMA). This is UDP-N-acetylmuramoylalanine--D-glutamate ligase from Desulfatibacillum aliphaticivorans.